We begin with the raw amino-acid sequence, 252 residues long: 2-succinyl-6-hydroxy-2,4-cyclohexadiene-1-carboxylate synthase (252 aa).

This sequence belongs to the AB hydrolase superfamily. MenH family. Monomer.

It carries out the reaction 5-enolpyruvoyl-6-hydroxy-2-succinyl-cyclohex-3-ene-1-carboxylate = (1R,6R)-6-hydroxy-2-succinyl-cyclohexa-2,4-diene-1-carboxylate + pyruvate. It participates in quinol/quinone metabolism; 1,4-dihydroxy-2-naphthoate biosynthesis; 1,4-dihydroxy-2-naphthoate from chorismate: step 3/7. It functions in the pathway quinol/quinone metabolism; menaquinone biosynthesis. Its function is as follows. Catalyzes a proton abstraction reaction that results in 2,5-elimination of pyruvate from 2-succinyl-5-enolpyruvyl-6-hydroxy-3-cyclohexene-1-carboxylate (SEPHCHC) and the formation of 2-succinyl-6-hydroxy-2,4-cyclohexadiene-1-carboxylate (SHCHC). This is 2-succinyl-6-hydroxy-2,4-cyclohexadiene-1-carboxylate synthase from Shigella dysenteriae serotype 1 (strain Sd197).